The following is a 487-amino-acid chain: NADH-quinone oxidoreductase subunit N (487 aa).

The next 14 membrane-spanning stretches (helical) occupy residues 12 to 32 (VLIL…LIGV), 40 to 60 (LTVT…IVLF), 79 to 99 (YMKI…VGFS), 104 to 124 (FDIF…MLMI), 129 to 149 (MLSL…LAAI), 164 to 184 (FVLG…LYGF), 201 to 221 (ILHL…AFKI), 248 to 268 (APKI…FIPL), 281 to 301 (ILIF…IGQT), 310 to 330 (SSIG…ILGV), 332 to 352 (GILI…AFIL), 378 to 398 (AIVM…AGFF), 411 to 431 (GLVP…FYYL), and 455 to 475 (LCLC…FWFS).

It belongs to the complex I subunit 2 family. In terms of assembly, NDH-1 is composed of 14 different subunits. Subunits NuoA, H, J, K, L, M, N constitute the membrane sector of the complex.

Its subcellular location is the cell inner membrane. The enzyme catalyses a quinone + NADH + 5 H(+)(in) = a quinol + NAD(+) + 4 H(+)(out). NDH-1 shuttles electrons from NADH, via FMN and iron-sulfur (Fe-S) centers, to quinones in the respiratory chain. The immediate electron acceptor for the enzyme in this species is believed to be ubiquinone. Couples the redox reaction to proton translocation (for every two electrons transferred, four hydrogen ions are translocated across the cytoplasmic membrane), and thus conserves the redox energy in a proton gradient. This is NADH-quinone oxidoreductase subunit N from Bartonella bacilliformis (strain ATCC 35685 / KC583 / Herrer 020/F12,63).